Here is a 211-residue protein sequence, read N- to C-terminus: MTIGVVGRKAGMTRIFTEEGVSIPVTVIEIEPNRVTQFKTEETDGYRAVQVTVGERRASRVTAAQAGHFAKANVAAGRGVWEFRLEEGDFQAGDLIKAELFTAGQLVDVTGQSKGKGFAGTIKRWNFRGQDNTHGNSVSHRVPGSIGQCQTPGRVFKGKKMSGHMGAERVTVQSLEVVRVDAERNLLLIKGAVPGATGGDVVVRPAVKARG.

The residue at position 150 (Gln-150) is an N5-methylglutamine.

Belongs to the universal ribosomal protein uL3 family. In terms of assembly, part of the 50S ribosomal subunit. Forms a cluster with proteins L14 and L19. In terms of processing, methylated by PrmB.

Functionally, one of the primary rRNA binding proteins, it binds directly near the 3'-end of the 23S rRNA, where it nucleates assembly of the 50S subunit. In Pseudomonas entomophila (strain L48), this protein is Large ribosomal subunit protein uL3.